A 462-amino-acid chain; its full sequence is Bifunctional protein GlmU (462 aa).

Positions 1-235 (MSYINFSAII…TFEIMGVNSK (235 aa)) are pyrophosphorylase. UDP-N-acetyl-alpha-D-glucosamine is bound by residues 11 to 14 (LAAG), lysine 25, glutamine 80, 85 to 86 (GT), 107 to 109 (YGD), glycine 144, glutamate 159, and asparagine 233. Position 109 (aspartate 109) interacts with Mg(2+). Asparagine 233 contacts Mg(2+). Residues 236–256 (SDFVDLDKQYQQRKVQCLLSS) form a linker region. The tract at residues 257–462 (GLMIIDPNRF…LNWKRLKNKK (206 aa)) is N-acetyltransferase. The UDP-N-acetyl-alpha-D-glucosamine site is built by arginine 339 and lysine 357. Histidine 369 acts as the Proton acceptor in catalysis. The UDP-N-acetyl-alpha-D-glucosamine site is built by tyrosine 372 and asparagine 383. Residues alanine 386, 392-393 (NY), alanine 429, and arginine 446 each bind acetyl-CoA.

This sequence in the N-terminal section; belongs to the N-acetylglucosamine-1-phosphate uridyltransferase family. It in the C-terminal section; belongs to the transferase hexapeptide repeat family. As to quaternary structure, homotrimer. It depends on Mg(2+) as a cofactor.

Its subcellular location is the cytoplasm. The enzyme catalyses alpha-D-glucosamine 1-phosphate + acetyl-CoA = N-acetyl-alpha-D-glucosamine 1-phosphate + CoA + H(+). It catalyses the reaction N-acetyl-alpha-D-glucosamine 1-phosphate + UTP + H(+) = UDP-N-acetyl-alpha-D-glucosamine + diphosphate. It functions in the pathway nucleotide-sugar biosynthesis; UDP-N-acetyl-alpha-D-glucosamine biosynthesis; N-acetyl-alpha-D-glucosamine 1-phosphate from alpha-D-glucosamine 6-phosphate (route II): step 2/2. It participates in nucleotide-sugar biosynthesis; UDP-N-acetyl-alpha-D-glucosamine biosynthesis; UDP-N-acetyl-alpha-D-glucosamine from N-acetyl-alpha-D-glucosamine 1-phosphate: step 1/1. The protein operates within bacterial outer membrane biogenesis; LPS lipid A biosynthesis. Its function is as follows. Catalyzes the last two sequential reactions in the de novo biosynthetic pathway for UDP-N-acetylglucosamine (UDP-GlcNAc). The C-terminal domain catalyzes the transfer of acetyl group from acetyl coenzyme A to glucosamine-1-phosphate (GlcN-1-P) to produce N-acetylglucosamine-1-phosphate (GlcNAc-1-P), which is converted into UDP-GlcNAc by the transfer of uridine 5-monophosphate (from uridine 5-triphosphate), a reaction catalyzed by the N-terminal domain. In Blochmanniella pennsylvanica (strain BPEN), this protein is Bifunctional protein GlmU.